The primary structure comprises 400 residues: Endoglucanase 5A (400 aa).

The N-terminal stretch at 1 to 26 (MKKITTIFVVLLMTVALFSIGNTTAA) is a signal peptide. Residues H61, 65–66 (WY), Y92, and H127 contribute to the substrate site. Catalysis depends on E165, which acts as the Proton donor. Position 228 (Y228) interacts with substrate. E254 functions as the Nucleophile in the catalytic mechanism. Residues 260–261 (AT), W288, and 293–295 (KDE) contribute to the substrate site. Residues 328 to 363 (ESASIPPSDPTPPSDPGEPDPTPPSDPGEYPAWDPN) are disordered. Over residues 334–353 (PSDPTPPSDPGEPDPTPPSD) the composition is skewed to pro residues. The Chitin-binding type-3 domain occupies 357–396 (YPAWDPNQIYTNEIVYHNGQLWQAKWWTQNQEPGDPYGPW).

This sequence belongs to the glycosyl hydrolase 5 (cellulase A) family. In terms of assembly, monomer.

The protein resides in the secreted. It catalyses the reaction Endohydrolysis of (1-&gt;4)-beta-D-glucosidic linkages in cellulose, lichenin and cereal beta-D-glucans.. The chain is Endoglucanase 5A (cel5A) from Salipaludibacillus agaradhaerens (Bacillus agaradhaerens).